The following is a 418-amino-acid chain: Actin-related protein 3 (418 aa).

This sequence belongs to the actin family. ARP3 subfamily. Component of the Arp2/3 complex composed of actr2/arp2, actr3/arp3, arpc1b, arpc2, arpc3, arpc4 and arpc5.

It is found in the cytoplasm. Its subcellular location is the cytoskeleton. The protein resides in the cell projection. The protein localises to the nucleus. Its function is as follows. ATP-binding component of the Arp2/3 complex, a multiprotein complex that mediates actin polymerization upon stimulation by nucleation-promoting factor (NPF). The Arp2/3 complex mediates the formation of branched actin networks in the cytoplasm, providing the force for cell motility. Seems to contact the pointed end of the daughter actin filament. In addition to its role in the cytoplasmic cytoskeleton, the Arp2/3 complex also promotes actin polymerization in the nucleus, thereby regulating gene transcription and repair of damaged DNA. The Arp2/3 complex promotes homologous recombination (HR) repair in response to DNA damage by promoting nuclear actin polymerization, leading to drive motility of double-strand breaks (DSBs). This is Actin-related protein 3 (actr3) from Takifugu rubripes (Japanese pufferfish).